The chain runs to 342 residues: MNLGVFPLLLALIGGASSTYPDYYEYYDFPQALYGRSSPNCAPECNCPESYPSAMYCDELKLKSVPMVPPGIKYLYLRNNQIDHIDDKAFENVTDLQWLILDHNLLENSKIKGKVFSKLKQLKKLHINYNNLTESVGPLPKSLVDLQLTNNKISKLGSFDGLVNLTFIHLQHNQLKEDAVSAALKGLKSLEYLDLSFNQMTKLPSGLPVSLLTLYLDNNKISNIPDEYFKRFSALQYLRLSHNELADSGVPGNSFNVSSLLELDLSYNKLKSIPTVNENLENYYLEVNELEKFDVKSFCKILGPLSYSKIKHLRLDGNHITQTSLPPDMYECLRVANEITVN.

Residues Met1–Ser18 form the signal peptide. Sulfotyrosine is present on residues Tyr20, Tyr23, and Tyr34. In terms of domain architecture, LRRNT spans Ala32–Pro70. LRR repeat units follow at residues Gly71–Asn92, Asp95–Lys118, Gln121–Lys141, Ser142–Val163, Asn164–Lys185, Ser189–Val209, Ser210–Arg231, and Ala234–Ser254. The N-linked (GlcNAc...) (keratan sulfate) asparagine glycan is linked to Asn92. Asn131 carries N-linked (GlcNAc...) (keratan sulfate) asparagine glycosylation. The N-linked (GlcNAc...) (keratan sulfate) asparagine glycan is linked to Asn164. Asn256 is a glycosylation site (N-linked (GlcNAc...) (keratan sulfate) asparagine). 2 LRR repeats span residues Ser259–Leu280 and Glu281–Lys300. Cys299 and Cys332 are oxidised to a cystine. A Phosphoserine modification is found at Ser308. One copy of the LRR 11 repeat lies at Lys309–Tyr330.

Belongs to the small leucine-rich proteoglycan (SLRP) family. SLRP class II subfamily. As to quaternary structure, binds to laminin. In terms of processing, sulfated on tyrosine residue(s). Post-translationally, contains keratan sulfate. As to expression, cornea and other tissues.

It is found in the secreted. It localises to the extracellular space. The protein localises to the extracellular matrix. This is Lumican (LUM) from Bos taurus (Bovine).